A 206-amino-acid polypeptide reads, in one-letter code: Tumor protein D54 (206 aa).

Met-1 is subject to N-acetylmethionine. A compositionally biased stretch (polar residues) spans 1 to 14 (MDSAGQDINLNSPN). Positions 1–24 (MDSAGQDINLNSPNKGLLSDSMTD) are disordered. Phosphoserine occurs at positions 3, 12, 19, and 21. The stretch at 38-82 (VEGLTEAEEEELRAELTKVEEEIVTLRQVLAAKERHCGELKRRLG) forms a coiled coil. Residues Ser-96, Ser-149, and Ser-161 each carry the phosphoserine modification. Thr-163 bears the Phosphothreonine mark. Ser-166 is subject to Phosphoserine. Residue Thr-173 is modified to Phosphothreonine. Residues 175-185 (KSKVVGDRENG) are compositionally biased toward basic and acidic residues. Positions 175 to 206 (KSKVVGDRENGSDSLPSSAGSGDKPLSDPAPF) are disordered. 2 positions are modified to phosphoserine: Ser-192 and Ser-195.

Belongs to the TPD52 family. Forms a homodimer or heterodimer with other members of the family. Interacts with MAL2.

This chain is Tumor protein D54 (TPD52L2), found in Pongo abelii (Sumatran orangutan).